The primary structure comprises 314 residues: L-lactate dehydrogenase 1 (314 aa).

NAD(+)-binding positions include valine 16, aspartate 37, lysine 42, tyrosine 68, and 82–83 (GL). Residues glutamine 85, arginine 91, and 123–126 (NPVD) each bind substrate. Residues 121 to 123 (ATN) and serine 146 each bind NAD(+). Residue 151–154 (DSAR) participates in substrate binding. Positions 156 and 171 each coordinate beta-D-fructose 1,6-bisphosphate. The active-site Proton acceptor is histidine 178. Tyrosine 223 is subject to Phosphotyrosine. Threonine 232 provides a ligand contact to substrate.

The protein belongs to the LDH/MDH superfamily. LDH family. Homotetramer.

It localises to the cytoplasm. The enzyme catalyses (S)-lactate + NAD(+) = pyruvate + NADH + H(+). It functions in the pathway fermentation; pyruvate fermentation to lactate; (S)-lactate from pyruvate: step 1/1. Its activity is regulated as follows. Allosterically activated by fructose 1,6-bisphosphate (FBP). Functionally, catalyzes the conversion of lactate to pyruvate. The chain is L-lactate dehydrogenase 1 from Bacillus cereus (strain ATCC 14579 / DSM 31 / CCUG 7414 / JCM 2152 / NBRC 15305 / NCIMB 9373 / NCTC 2599 / NRRL B-3711).